The following is a 314-amino-acid chain: Small glutamine-rich tetratricopeptide repeat-containing protein alpha (314 aa).

The tract at residues 65-99 (ATASKEMPQDPRGPDRTPPSEEDSAEAERLKTEGN) is disordered. Positions 71–83 (MPQDPRGPDRTPP) are enriched in basic and acidic residues. T81 bears the Phosphothreonine mark. Phosphoserine is present on S84. Residues 90–99 (EAERLKTEGN) are compositionally biased toward basic and acidic residues. TPR repeat units follow at residues 91–124 (AERL…NPAN), 125–158 (AVYF…DPGY), and 159–192 (SKAY…DPDN). The residue at position 137 (K137) is an N6-acetyllysine. Positions 249 to 268 (GMISGGHNPLGTPGSSPQHS) are disordered. Phosphoserine is present on S302. Phosphothreonine is present on T304. S306 is modified (phosphoserine).

It belongs to the SGT family. As to quaternary structure, homodimer. Homooligomer. Interacts with DNAJC5 and DNAJC5B. Interacts (via TPR repeats) with HSP90AA1. Interacts (via Gln-rich region) with SLC2A1. Interacts with HSP90AB1. Interacts (via TPR repeats) with HSPA8/Hsc70; the interaction is direct. Interacts with BAG6 (via ubiquitin-like domain); interaction prevents interaction between BAG6 and RNF126. Forms a multiprotein complex, at least composed of DNAJB12, DNAJB14, HSPA8/Hsc70 and SGTA; interaction with DNAJB14 and HSPA8/Hsc70 is direct. In terms of assembly, (Microbial infection) Interacts with NS1 from parvovirus H-1. In terms of tissue distribution, ubiquitously expressed.

The protein resides in the cytoplasm. It localises to the nucleus. In terms of biological role, co-chaperone that binds misfolded and hydrophobic patches-containing client proteins in the cytosol. Mediates their targeting to the endoplasmic reticulum but also regulates their sorting to the proteasome when targeting fails. Functions in tail-anchored/type II transmembrane proteins membrane insertion constituting with ASNA1 and the BAG6 complex a targeting module. Functions upstream of the BAG6 complex and ASNA1, binding more rapidly the transmembrane domain of newly synthesized proteins. It is also involved in the regulation of the endoplasmic reticulum-associated misfolded protein catabolic process via its interaction with BAG6: collaborates with the BAG6 complex to maintain hydrophobic substrates in non-ubiquitinated states. Competes with RNF126 for interaction with BAG6, preventing the ubiquitination of client proteins associated with the BAG6 complex. Binds directly to HSC70 and HSP70 and regulates their ATPase activity. The sequence is that of Small glutamine-rich tetratricopeptide repeat-containing protein alpha (Sgta) from Rattus norvegicus (Rat).